We begin with the raw amino-acid sequence, 483 residues long: ATP-dependent RNA helicase DDX25 (483 aa).

The Nuclear export signal motif lies at 61-74 (LAANSLLNKLIHQS). The Q motif signature appears at 97–125 (KTFEELRLKEELLKGIYAMGFNRPSKIQE). The Nuclear localization signal signature appears at 100–114 (EELRLKEELLKGIYA). A Helicase ATP-binding domain is found at 130-300 (MMLAHPPQNL…ERIIPDPNVI (171 aa)). An ATP-binding site is contributed by 143 to 150 (SQSGTGKT). A DEAD box motif is present at residues 247–250 (DEAD). In terms of domain architecture, Helicase C-terminal spans 311–478 (NIRQYYVLCE…QLNAEDMDEI (168 aa)).

This sequence belongs to the DEAD box helicase family. In terms of processing, phosphorylated on threonine residues. The phosphorylated form is found in the cytoplasm but not in the nucleus. Highly expressed in the Leydig and germ cells of the testis and weakly expressed in the pituitary and hypothalamus.

The protein resides in the cytoplasm. Its subcellular location is the nucleus. It carries out the reaction ATP + H2O = ADP + phosphate + H(+). Functionally, ATP-dependent RNA helicase. Required for mRNA export and translation regulation during spermatid development. This chain is ATP-dependent RNA helicase DDX25 (DDX25), found in Homo sapiens (Human).